The sequence spans 1439 residues: Mediator of RNA polymerase II transcription subunit 23 (1439 aa).

A coiled-coil region spans residues 282–318 (SQMLNLQKHQKQRYNALEEQLVNLIVQAMEMTEANDA). Residues 358–625 (HIVLALHEKL…HHVPTHYRVQ (268 aa)) are interaction with Hsf. Disordered stretches follow at residues 1338–1372 (NDNTSNNAITSQTQSPMQTQHQQQPQQPHQQQQQQ) and 1401–1439 (SVPLGSGGNLQQQQQINQQQQMYMQHMQQHQHMQNMRHN). Low complexity-rich tracts occupy residues 1348–1372 (SQTQSPMQTQHQQQPQQPHQQQQQQ) and 1411–1439 (QQQQQINQQQQMYMQHMQQHQHMQNMRHN).

Belongs to the Mediator complex subunit 23 family. As to quaternary structure, component of the Mediator complex. Interacts with Hsf.

The protein localises to the nucleus. Functionally, component of the Mediator complex, a coactivator involved in the regulated transcription of nearly all RNA polymerase II-dependent genes. Mediator functions as a bridge to convey information from gene-specific regulatory proteins to the basal RNA polymerase II transcription machinery. Mediator is recruited to promoters by direct interactions with regulatory proteins and serves as a scaffold for the assembly of a functional preinitiation complex with RNA polymerase II and the general transcription factors. Required for transcriptional activation in response to heat shock. The chain is Mediator of RNA polymerase II transcription subunit 23 (MED23) from Drosophila melanogaster (Fruit fly).